We begin with the raw amino-acid sequence, 444 residues long: Glucoside xylosyltransferase 2 (444 aa).

Residues 1–4 lie on the Cytoplasmic side of the membrane; that stretch reads MKLR. Residues 5–25 traverse the membrane as a helical; Signal-anchor for type II membrane protein segment; it reads SKAAALLLLALAVLLLALLSL. Residues 26-444 lie on the Lumenal side of the membrane; it reads RARRDPEPPG…IIHMGPNPMS (419 aa). A disordered region spans residues 31-101; the sequence is PEPPGFPARP…LARRPGETRS (71 aa). Residues 68–83 are compositionally biased toward basic residues; it reads RSPRRQPPRLRPRAGR. The span at 87 to 101 shows a compositional bias: basic and acidic residues; sequence ASREKLARRPGETRS. N-linked (GlcNAc...) asparagine glycosylation occurs at asparagine 275.

Belongs to the glycosyltransferase 8 family.

It is found in the membrane. It carries out the reaction 3-O-(beta-D-glucosyl)-L-seryl-[EGF-like domain protein] + UDP-alpha-D-xylose = 3-O-[alpha-D-xylosyl-(1-&gt;3)-beta-D-glucosyl]-L-seryl-[EGF-like domain protein] + UDP + H(+). Functionally, glycosyltransferase which elongates the O-linked glucose attached to EGF-like repeats in the extracellular domain of Notch proteins by catalyzing the addition of xylose. This Mus musculus (Mouse) protein is Glucoside xylosyltransferase 2 (Gxylt2).